A 283-amino-acid chain; its full sequence is Lipoyl synthase (283 aa).

7 residues coordinate [4Fe-4S] cluster: C35, C40, C46, C61, C65, C68, and S273. The region spanning 47–262 (FRERQATFLI…RAAALATGFA (216 aa)) is the Radical SAM core domain.

It belongs to the radical SAM superfamily. Lipoyl synthase family. [4Fe-4S] cluster is required as a cofactor.

Its subcellular location is the cytoplasm. The enzyme catalyses [[Fe-S] cluster scaffold protein carrying a second [4Fe-4S](2+) cluster] + N(6)-octanoyl-L-lysyl-[protein] + 2 oxidized [2Fe-2S]-[ferredoxin] + 2 S-adenosyl-L-methionine + 4 H(+) = [[Fe-S] cluster scaffold protein] + N(6)-[(R)-dihydrolipoyl]-L-lysyl-[protein] + 4 Fe(3+) + 2 hydrogen sulfide + 2 5'-deoxyadenosine + 2 L-methionine + 2 reduced [2Fe-2S]-[ferredoxin]. Its pathway is protein modification; protein lipoylation via endogenous pathway; protein N(6)-(lipoyl)lysine from octanoyl-[acyl-carrier-protein]: step 2/2. Catalyzes the radical-mediated insertion of two sulfur atoms into the C-6 and C-8 positions of the octanoyl moiety bound to the lipoyl domains of lipoate-dependent enzymes, thereby converting the octanoylated domains into lipoylated derivatives. In Geobacter metallireducens (strain ATCC 53774 / DSM 7210 / GS-15), this protein is Lipoyl synthase.